Consider the following 262-residue polypeptide: Flap endonuclease Xni (262 aa).

Aspartate 105 contributes to the Mg(2+) binding site. One can recognise a 5'-3' exonuclease domain in the interval 162 to 259 (ERSQFLDLMA…VIDSQPEKTI (98 aa)). Residues leucine 172, alanine 173, proline 181, isoleucine 183, and isoleucine 186 each contribute to the K(+) site. Residues 185-190 (GIGPKS) are interaction with DNA.

It belongs to the Xni family. Mg(2+) is required as a cofactor. Requires K(+) as cofactor.

Functionally, has flap endonuclease activity. During DNA replication, flap endonucleases cleave the 5'-overhanging flap structure that is generated by displacement synthesis when DNA polymerase encounters the 5'-end of a downstream Okazaki fragment. The sequence is that of Flap endonuclease Xni from Shewanella baltica (strain OS185).